Here is a 282-residue protein sequence, read N- to C-terminus: Probable endonuclease 4 (282 aa).

Zn(2+)-binding residues include histidine 71, histidine 111, glutamate 147, aspartate 181, histidine 184, histidine 218, aspartate 231, histidine 233, and glutamate 263.

This sequence belongs to the AP endonuclease 2 family. Zn(2+) serves as cofactor.

It catalyses the reaction Endonucleolytic cleavage to 5'-phosphooligonucleotide end-products.. In terms of biological role, endonuclease IV plays a role in DNA repair. It cleaves phosphodiester bonds at apurinic or apyrimidinic (AP) sites, generating a 3'-hydroxyl group and a 5'-terminal sugar phosphate. In Protochlamydia amoebophila (strain UWE25), this protein is Probable endonuclease 4.